Here is a 463-residue protein sequence, read N- to C-terminus: Putative WAS protein family homolog 3 (463 aa).

Positions 1–54 are required for WASH complex assembly; the sequence is MTPVRMQHSLAGQTYAVPLIQPDLRREEAVQQMADALQYLQKVSGDIFSRISQQ. Residues 1-165 form a WHD1 region; that stretch reads MTPVRMQHSL…EGLGGLPSNI (165 aa). Lys-218 is covalently cross-linked (Glycyl lysine isopeptide (Lys-Gly) (interchain with G-Cter in ubiquitin)). The disordered stretch occupies residues 295 to 463; it reads QDGVLTPPPP…AEEDEDDWES (169 aa). A compositionally biased stretch (pro residues) spans 300–312; it reads TPPPPPPPPPPAP. The interval 347–463 is VCA; sequence QGAPREVVDP…AEEDEDDWES (117 aa). Residues 359 to 381 form the WH2 domain; that stretch reads GRATLLESIRQAGGIGKAKLRSM. Basic and acidic residues predominate over residues 380–396; the sequence is SMKERKLEKKQQKEQEQ. Gly residues predominate over residues 422-434; the sequence is SGKGPGAGEGPGG. The span at 454 to 463 shows a compositional bias: acidic residues; that stretch reads AEEDEDDWES.

It belongs to the WASH1 family. In terms of assembly, component of the WASH core complex also described as WASH regulatory complex (SHRC) composed of WASH (WASHC1, WASH2P or WASH3P), WASHC2 (WASHC2A or WASHC2C), WASHC3, WASHC4 and WASHC5. The WASH core complex associates with the F-actin-capping protein dimer (formed by CAPZA1, CAPZA2 or CAPZA3 and CAPZB) in a transient or substoichiometric manner which was initially described as WASH complex. Interacts (via WHD1 region) with WASHC2C; the interaction is direct. Interacts with alpha-tubulin. Interacts with BECN1; WASHC1 and AMBRA1 can competitively interact with BECN1. Interacts with BLOC1S2; may associate with the BLOC-1 complex. Interacts with tubulin gamma chain (TUBG1 or TUBG2). Interacts with EXOC1, EXOC4, EXOC8; in MMP14-positive endosomes in breast tumor cells; indicative for an association with the exocyst complex.

The protein resides in the early endosome. It is found in the early endosome membrane. It localises to the recycling endosome membrane. The protein localises to the cell projection. Its subcellular location is the lamellipodium. The protein resides in the filopodium. It is found in the cytoplasmic vesicle. It localises to the autophagosome. The protein localises to the cytoplasm. Its subcellular location is the cytoskeleton. The protein resides in the microtubule organizing center. It is found in the centrosome. It localises to the centriole. Acts as a nucleation-promoting factor at the surface of endosomes, where it recruits and activates the Arp2/3 complex to induce actin polymerization, playing a key role in the fission of tubules that serve as transport intermediates during endosome sorting. Involved in endocytic trafficking of EGF. Involved in transferrin receptor recycling. Regulates the trafficking of endosomal alpha5beta1 integrin to the plasma membrane and involved in invasive cell migration. In T-cells involved in endosome-to-membrane recycling of receptors including T-cell receptor (TCR), CD28 and ITGAL; proposed to be implicated in T cell proliferation and effector function. In dendritic cells involved in endosome-to-membrane recycling of major histocompatibility complex (MHC) class II probably involving retromer and subsequently allowing antigen sampling, loading and presentation during T-cell activation. Involved in Arp2/3 complex-dependent actin assembly driving Salmonella typhimurium invasion independent of ruffling. Involved in the exocytosis of MMP14 leading to matrix remodeling during invasive migration and implicating late endosome-to-plasma membrane tubular connections and cooperation with the exocyst complex. Involved in negative regulation of autophagy independently from its role in endosomal sorting by inhibiting BECN1 ubiquitination to inactivate PIK3C3/Vps34 activity. The polypeptide is Putative WAS protein family homolog 3 (WASH3P) (Homo sapiens (Human)).